A 488-amino-acid chain; its full sequence is Sucrose phosphorylase (488 aa).

Sucrose contacts are provided by residues Asp-50, His-88, 191 to 193, Glu-233, 290 to 291, 341 to 344, and Arg-398; these read RLD, HD, and DLYQ. The active-site Nucleophile is Asp-193. Glu-233 functions as the Proton donor in the catalytic mechanism.

Belongs to the glycosyl hydrolase 13 family. Sucrose phosphorylase subfamily.

It carries out the reaction sucrose + phosphate = D-fructose + alpha-D-glucose 1-phosphate. In Agrobacterium vitis (Rhizobium vitis), this protein is Sucrose phosphorylase.